We begin with the raw amino-acid sequence, 103 residues long: MYAVFQSGGKQHRVSEGQTVRLEKLDIATGETIEFAEVLMVANGEEVKIGVPFVDGGVIKAEVVAHGRGEKVKIVKFRRRKHYRKQQGHRQWFTDVKITGISA.

This sequence belongs to the bacterial ribosomal protein bL21 family. In terms of assembly, part of the 50S ribosomal subunit. Contacts protein L20.

In terms of biological role, this protein binds to 23S rRNA in the presence of protein L20. In Salmonella schwarzengrund (strain CVM19633), this protein is Large ribosomal subunit protein bL21.